Consider the following 824-residue polypeptide: Disintegrin and metalloproteinase domain-containing protein 8 (824 aa).

The N-terminal stretch at 1–16 is a signal peptide; that stretch reads MRGLGLWLLGAMMLPA. Residues 17-655 are Extracellular-facing; sequence IAPSRPWALM…EVHAASGSLP (639 aa). 2 N-linked (GlcNAc...) asparagine glycosylation sites follow: Asn-67 and Asn-91. The Peptidase M12B domain occupies 200-400; that stretch reads RYVELYVVVD…PQSVCLANAP (201 aa). 12 disulfide bridges follow: Cys-310–Cys-395, Cys-351–Cys-379, Cys-353–Cys-362, Cys-435–Cys-457, Cys-448–Cys-454, Cys-466–Cys-486, Cys-473–Cys-503, Cys-498–Cys-508, Cys-566–Cys-613, Cys-613–Cys-623, Cys-617–Cys-629, and Cys-631–Cys-640. A Zn(2+)-binding site is contributed by His-334. Glu-335 is a catalytic residue. Residues His-338 and His-344 each contribute to the Zn(2+) site. Positions 408–494 constitute a Disintegrin domain; sequence GPVCGNLFVE…ECPEDAFQEN (87 aa). N-linked (GlcNAc...) asparagine glycosylation is present at Asn-436. One can recognise an EGF-like domain in the interval 609-641; it reads RSSNCSAQCHNHGVCNHKQECHCHAGWAPPHCA. Asn-612 carries an N-linked (GlcNAc...) asparagine glycan. A helical transmembrane segment spans residues 656 to 676; it reads VFVVVVLVLLAVVLVTLAGII. The Cytoplasmic portion of the chain corresponds to 677–824; sequence VYRKARSRIL…KQGAGAPTAP (148 aa). Disordered regions lie at residues 710–756 and 776–824; these read VPAK…PVTV and KPTF…PTAP. Residues 747–756 show a composition bias toward pro residues; sequence RPPPAPPVTV. A compositionally biased stretch (low complexity) spans 788–804; it reads PGAGAANPGPAEGAVGP.

As to quaternary structure, interacts with FST3. The cofactor is Zn(2+). As to expression, expressed on neutrophils and monocytes.

Its subcellular location is the membrane. Functionally, possible involvement in extravasation of leukocytes. The polypeptide is Disintegrin and metalloproteinase domain-containing protein 8 (ADAM8) (Homo sapiens (Human)).